We begin with the raw amino-acid sequence, 129 residues long: Small ribosomal subunit protein uS8 (129 aa).

This sequence belongs to the universal ribosomal protein uS8 family. In terms of assembly, part of the 30S ribosomal subunit. Contacts proteins S5 and S12.

In terms of biological role, one of the primary rRNA binding proteins, it binds directly to 16S rRNA central domain where it helps coordinate assembly of the platform of the 30S subunit. The chain is Small ribosomal subunit protein uS8 from Mycoplasma capricolum subsp. capricolum (strain California kid / ATCC 27343 / NCTC 10154).